An 80-amino-acid chain; its full sequence is DNA-directed RNA polymerase RPB10 homolog (80 aa).

Zn(2+) contacts are provided by cysteine 7, cysteine 10, cysteine 65, and cysteine 66.

It belongs to the archaeal RpoN/eukaryotic RPB10 RNA polymerase subunit family. Part of the viral DNA-directed RNA polymerase that consists of 8 polII-like subunits (RPB1, RPB2, RPB3, RPB5, RPB6, RPB7, RPB9, RPB10), a capping enzyme and a termination factor.

The protein localises to the host cytoplasm. Component of the DNA-directed RNA polymerase (RNAP) that catalyzes the transcription in the cytoplasm of viral DNA into RNA using the four ribonucleoside triphosphates as substrates. This chain is DNA-directed RNA polymerase RPB10 homolog, found in African swine fever virus (isolate Pig/Kenya/KEN-50/1950) (ASFV).